A 520-amino-acid chain; its full sequence is Keratin, type II cytoskeletal 78 (520 aa).

The head stretch occupies residues 1–110 (MSLSPCRAQR…DPQFQVVRTQ (110 aa)). The tract at residues 111-146 (ETQEIRTLNNQFASFIDKVRFLEQQNKVLETKWHLL) is coil 1A. The 314-residue stretch at 111 to 424 (ETQEIRTLNN…RLLEGEECRM (314 aa)) folds into the IF rod domain. The interval 147–165 (QQQGLSGSQQGLEPVFEAC) is linker 1. A coil 1B region spans residues 166 to 258 (LDQLRKQLEQ…LNEEELGQLQ (93 aa)). Residues 259 to 281 (TQASDTSVVLSMDNNRYLDFSSI) are linker 12. Residues 282-421 (ITEVRARYEE…TYRRLLEGEE (140 aa)) are coil 2. The segment at 422 to 520 (CRMSGECTSQ…ESSLKTSITY (99 aa)) is tail.

Belongs to the intermediate filament family. Heterotetramer of two type I and two type II keratins. In terms of tissue distribution, in non-keratinising esophageal and vaginal epithelium, strongly expressed in the basal and parabasal/lower suprabasal cell layers with considerably decreased expression in the mid/upper suprabasal layers (at protein level). A similar gradient from basal to lower suprabasal layers is seen in the partially keratinised dorsal tongue epithelium, in the scalp and in the plantar epidermis (at protein level). Extension of expression into the suprabasal compartments is distinctly more pronounced in non-keratinising epithelia than in keratinising epithelia and epidermis (at protein level). In scalp sections, present in the interfollicular epidermis and infundibulum including the entire outer root sheath of the hair follicles and also in the sebocytes (at protein level). In sweat glands, expressed in peripheral and luminal cells of the lower duct and in peripheral cells of the middle/upper duct with no expression observed in luminal cells (at protein level). In embryos at the 14th week of pregnancy, detected in basal and parabasal layers but is absent from the uppermost epidermal layer (at protein level). Expressed in tongue epithelium.

The polypeptide is Keratin, type II cytoskeletal 78 (KRT78) (Homo sapiens (Human)).